The following is a 256-amino-acid chain: Protein LIKE COV 1 (256 aa).

Basic and acidic residues predominate over residues 1–10 (MANRERDREL). The segment at 1–39 (MANRERDRELLIPVADFGDKDDGSSSKPSSSSSASSSHQ) is disordered. The Cytoplasmic portion of the chain corresponds to 1–60 (MANRERDRELLIPVADFGDKDDGSSSKPSSSSSASSSHQSGHETLSLFIRGWASKKFMTG). The span at 25-39 (SSKPSSSSSASSSHQ) shows a compositional bias: low complexity. A helical transmembrane segment spans residues 61–81 (CVILLPIAVTFYTTWWFIHFV). Residues 82 to 93 (DGFFSPIYALLG) lie on the Extracellular side of the membrane. Residues 94 to 114 (INIFGFGFLTSIAFIFLVGVF) form a helical membrane-spanning segment. Over 115-256 (MSSWLGASVL…KPLASIGNES (142 aa)) the chain is Cytoplasmic.

Belongs to the plant COV1 protein family. In terms of tissue distribution, expressed at low levels in flowers, stems, roots and leaves.

The protein localises to the membrane. This chain is Protein LIKE COV 1, found in Arabidopsis thaliana (Mouse-ear cress).